Consider the following 1493-residue polypeptide: Mitogen-activated protein kinase kinase kinase 1 (1493 aa).

Over residues 1 to 23 (MAAAAGDRASSSGFPGAAAASPE) the composition is skewed to low complexity. Disordered regions lie at residues 1-178 (MAAA…PEER) and 194-300 (HEWL…EETS). At A2 the chain carries N-acetylalanine. S21 is modified (phosphoserine). The span at 24-35 (AGGGGGGGGALQ) shows a compositional bias: gly residues. A compositionally biased stretch (low complexity) spans 36 to 46 (GSGAPAAGAAG). Residues 89-99 (PPCPSTSPSPE) show a composition bias toward pro residues. Residues 140-156 (ARSPAGAEPPSAAAPSG) show a composition bias toward low complexity. A Phosphoserine modification is found at S142. Residues 157–178 (REMENKETLKGLHKMEDRPEER) show a composition bias toward basic and acidic residues. Positions 235 to 256 (SAAPAPKGRRSPSPGSSPSGRS) are enriched in low complexity. S270 is modified (phosphoserine). T280 carries the phosphothreonine modification. S287, S292, and S295 each carry phosphoserine. Residues 333-361 (YRVFIGPQNCSCGRGAFCIHLLFVMLRVF) form an SWIM-type zinc finger. The segment covering 411–428 (SNSHTLSSSSTSTSSSEN) has biased composition (low complexity). The segment at 411 to 431 (SNSHTLSSSSTSTSSSENSIK) is disordered. The RING-type zinc-finger motif lies at 438 to 487 (CPICLLGMLDEESLTVCEDGCRNKLHHHCMSIWAEECRRNREPLICPLCR). Phosphoserine occurs at positions 502 and 526. Disordered regions lie at residues 506 to 531 (SPAS…RRNQ) and 895 to 914 (EHTV…RLSA). Over residues 512 to 527 (AVQQPSSPQQPVAGSQ) the composition is skewed to low complexity. S915 carries the phosphoserine modification. 2 disordered regions span residues 927-957 (SVGL…LNSS) and 992-1066 (PCKI…TLDL). Positions 998–1013 (ASPQTQRKFSLQFQRN) are enriched in polar residues. S999 and S1024 each carry phosphoserine. The span at 1049–1063 (GSTSKLGDATKSSMT) shows a compositional bias: polar residues. Residues 1224–1489 (WLKGQQIGLG…SRELLKHPVF (266 aa)) enclose the Protein kinase domain. Residues 1230 to 1238 (IGLGAFSSC) and K1253 each bind ATP. The active-site Proton acceptor is the D1350. Phosphothreonine; by autocatalysis occurs at positions 1381 and 1393.

This sequence belongs to the protein kinase superfamily. STE Ser/Thr protein kinase family. MAP kinase kinase kinase subfamily. As to quaternary structure, binds both upstream activators and downstream substrates in multimolecular complexes through its N-terminus. Oligomerizes after binding MAP4K2 or TRAF2. Interacts with AXIN1. Interacts (via the kinase catalytic domain) with STK38. Interacts with GRIPAP1. It depends on Mg(2+) as a cofactor. Post-translationally, autophosphorylated. In terms of tissue distribution, highly expressed in the heart and spleen while a lower level expression is seen in the liver.

It catalyses the reaction L-seryl-[protein] + ATP = O-phospho-L-seryl-[protein] + ADP + H(+). The catalysed reaction is L-threonyl-[protein] + ATP = O-phospho-L-threonyl-[protein] + ADP + H(+). Its activity is regulated as follows. Activated by autophosphorylation on Thr-1381 and Thr-1393 following oligomerization. In terms of biological role, component of a protein kinase signal transduction cascade. Activates the ERK and JNK kinase pathways by phosphorylation of MAP2K1 and MAP2K4. May phosphorylate the MAPK8/JNK1 kinase. Activates CHUK and IKBKB, the central protein kinases of the NF-kappa-B pathway. This chain is Mitogen-activated protein kinase kinase kinase 1 (Map3k1), found in Mus musculus (Mouse).